The primary structure comprises 145 residues: D-aminoacyl-tRNA deacylase (145 aa).

The Gly-cisPro motif, important for rejection of L-amino acids motif lies at 137–138; it reads GP.

It belongs to the DTD family. As to quaternary structure, homodimer.

Its subcellular location is the cytoplasm. It catalyses the reaction glycyl-tRNA(Ala) + H2O = tRNA(Ala) + glycine + H(+). The enzyme catalyses a D-aminoacyl-tRNA + H2O = a tRNA + a D-alpha-amino acid + H(+). In terms of biological role, an aminoacyl-tRNA editing enzyme that deacylates mischarged D-aminoacyl-tRNAs. Also deacylates mischarged glycyl-tRNA(Ala), protecting cells against glycine mischarging by AlaRS. Acts via tRNA-based rather than protein-based catalysis; rejects L-amino acids rather than detecting D-amino acids in the active site. By recycling D-aminoacyl-tRNA to D-amino acids and free tRNA molecules, this enzyme counteracts the toxicity associated with the formation of D-aminoacyl-tRNA entities in vivo and helps enforce protein L-homochirality. In Shewanella woodyi (strain ATCC 51908 / MS32), this protein is D-aminoacyl-tRNA deacylase.